We begin with the raw amino-acid sequence, 310 residues long: Cytochrome f (310 aa).

The N-terminal stretch at 1–26 (MNIKLTLLVLISIINLMIIQPIQTLA) is a signal peptide. Heme contacts are provided by Phe27, Cys47, Cys50, and His51. Residues 276 to 296 (IKGMIVFFFTVTIAQIFFVLK) traverse the membrane as a helical segment.

It belongs to the cytochrome f family. The 4 large subunits of the cytochrome b6-f complex are cytochrome b6, subunit IV (17 kDa polypeptide, petD), cytochrome f and the Rieske protein, while the 4 small subunits are PetG, PetL, PetM and PetN. The complex functions as a dimer. The cofactor is heme.

The protein resides in the plastid. The protein localises to the chloroplast thylakoid membrane. Functionally, component of the cytochrome b6-f complex, which mediates electron transfer between photosystem II (PSII) and photosystem I (PSI), cyclic electron flow around PSI, and state transitions. The protein is Cytochrome f of Gracilaria tenuistipitata var. liui (Red alga).